Reading from the N-terminus, the 247-residue chain is uncharacterized protein (247 aa).

The NADP(+) site is built by Leu-11, Asn-85, and Lys-119. The Proton donor role is filled by Ser-136. Positions 150, 154, 181, and 183 each coordinate NADP(+). The active-site Proton acceptor is the Tyr-150. The Lowers pKa of active site Tyr role is filled by Lys-154.

The protein belongs to the short-chain dehydrogenases/reductases (SDR) family.

This is an uncharacterized protein from Schizosaccharomyces pombe (strain 972 / ATCC 24843) (Fission yeast).